Reading from the N-terminus, the 1265-residue chain is Stromal processing peptidase, chloroplastic (1265 aa).

Residues Met1–Asn143 constitute a chloroplast transit peptide. His240 is a binding site for Zn(2+). The Proton acceptor role is filled by Glu243. His244 serves as a coordination point for Zn(2+). Glu314 is an active-site residue. Glu321 is a Zn(2+) binding site.

This sequence belongs to the peptidase M16 family. Zn(2+) serves as cofactor.

The protein localises to the plastid. The protein resides in the chloroplast stroma. Its function is as follows. Cleaves presequences (transit peptides) from chloroplastic protein precursors. Initially recognizes a precursor by binding to the C-terminus of its transit peptide and then removes the transit peptide in a single endoproteolytic step. In a next step, pursues the cleavage of transit peptide to a subfragment form. This is Stromal processing peptidase, chloroplastic from Arabidopsis thaliana (Mouse-ear cress).